Here is a 147-residue protein sequence, read N- to C-terminus: MALKRIHKELNDLAQDPPAQCSAGPVGEDMFHWQATIMGPNDSPYQGGAFFLTIDFPTEYPFKPPKVEFTTRIYHPNVNSNGSICLDILRSQWSPALTISKVLLSISSLLCDPNPDDPLVPEIAQIYKTDRDKYNRTAREWTQKYAM.

A UBC core domain is found at 1–147; that stretch reads MALKRIHKEL…AREWTQKYAM (147 aa). Catalysis depends on C85, which acts as the Glycyl thioester intermediate.

Belongs to the ubiquitin-conjugating enzyme family. As to quaternary structure, interacts with CNOT4 (via RING domain). As to expression, testis-specific. Mainly expressed in the round spermatids (at protein level).

The enzyme catalyses S-ubiquitinyl-[E1 ubiquitin-activating enzyme]-L-cysteine + [E2 ubiquitin-conjugating enzyme]-L-cysteine = [E1 ubiquitin-activating enzyme]-L-cysteine + S-ubiquitinyl-[E2 ubiquitin-conjugating enzyme]-L-cysteine.. It participates in protein modification; protein ubiquitination. Its function is as follows. Catalyzes the covalent attachment of ubiquitin to other proteins. Mediates the selective degradation of short-lived and abnormal proteins. Functions in the E6/E6-AP-induced ubiquitination of p53/TP53. Mediates ubiquitination of PEX5 and SQSTM1 and autoubiquitination of STUB1 and TRAF6. Involved in the signal-induced conjugation and subsequent degradation of NFKBIA, FBXW2-mediated GCM1 ubiquitination and degradation, MDM2-dependent degradation of p53/TP53 and the activation of MAVS in the mitochondria by RIGI in response to viral infection Plays a role in early maturation of the testis. In Rattus norvegicus (Rat), this protein is Ubiquitin-conjugating enzyme E2 D2B (Ube2d2b).